The following is a 321-amino-acid chain: Malate dehydrogenase (321 aa).

Residues 10 to 15 (GAGQIG) and aspartate 34 contribute to the NAD(+) site. Positions 83 and 89 each coordinate substrate. Residues asparagine 96 and 119–121 (ITN) contribute to the NAD(+) site. 2 residues coordinate substrate: asparagine 121 and arginine 152. The active-site Proton acceptor is the histidine 176.

This sequence belongs to the LDH/MDH superfamily. MDH type 3 family.

The catalysed reaction is (S)-malate + NAD(+) = oxaloacetate + NADH + H(+). Catalyzes the reversible oxidation of malate to oxaloacetate. The chain is Malate dehydrogenase from Xanthobacter autotrophicus (strain ATCC BAA-1158 / Py2).